A 1115-amino-acid chain; its full sequence is Neural cell adhesion molecule 1 (1115 aa).

Residues 1–19 form the signal peptide; it reads MLRTKDLIWTLFFLGTAVS. 5 Ig-like C2-type domains span residues 20–111, 116–205, 212–302, 309–402, and 407–492; these read LQVD…ATVN, QKLM…KDIQ, PTVQ…ASIH, PKIT…MYLE, and PKLQ…ESLE. At 20–711 the chain is on the extracellular side; the sequence is LQVDIVPSQG…NGSPTAGLST (692 aa). Disulfide bonds link cysteine 41-cysteine 96 and cysteine 139-cysteine 189. Heparin is bound by residues 152–156 and 161–165; these read KHKGR and KKDVR. The N-linked (GlcNAc...) asparagine; partial glycan is linked to asparagine 222. Cysteine 235 and cysteine 288 are disulfide-bonded. Asparagine 316, asparagine 348, asparagine 424, asparagine 450, and asparagine 479 each carry an N-linked (GlcNAc...) asparagine glycan. The cysteines at positions 330 and 386 are disulfide-linked. Cysteine 427 and cysteine 480 are joined by a disulfide. Fibronectin type-III domains are found at residues 500 to 599 and 601 to 696; these read TPSS…TQPV and EPSA…SAQP. Threonine 706 carries the GPI-anchor amidated serine lipid modification. A helical membrane pass occupies residues 712–729; the sequence is GAIVGILIVIFVLLLVVM. At 730-1115 the chain is on the cytoplasmic side; that stretch reads DITCYFLNKC…TQTKENESKA (386 aa). Disordered stretches follow at residues 756–809, 839–912, and 924–1115; these read GAKG…TEPE, FATA…SASN, and VLSP…ESKA. Residues 758 to 799 are compositionally biased toward basic and acidic residues; it reads KGKDMEEGKAAFSKDESKEPIVEVRTEEERTPNHDGGKHTEP. Phosphoserine is present on residues serine 770 and serine 774. Composition is skewed to low complexity over residues 800–809, 845–856, and 876–896; these read NETTPLTEPE, SPTSETTTLTSS, and TPSK…KVAP. Phosphoserine occurs at positions 887 and 890. Composition is skewed to polar residues over residues 902–912 and 926–935; these read DTPTSAPSASN and SPSTPASAGE. Serine 926 carries the post-translational modification Phosphoserine. Threonine 929 bears the Phosphothreonine mark. 2 stretches are compositionally biased toward low complexity: residues 936–974 and 999–1012; these read TSKA…PQAK and AATA…KAAT. Residues serine 946 and serine 958 each carry the phosphoserine modification. Phosphothreonine is present on threonine 1001. Residue serine 1005 is modified to Phosphoserine. Composition is skewed to basic and acidic residues over residues 1019 to 1037 and 1074 to 1091; these read EDLK…DLAK and KTEK…ESEA. A Phosphothreonine modification is found at threonine 1030.

Interacts with MDK. Found in a complex with SLC39A6, SLC39A10 and with NCAM1; this complex controls NCAM1 phosphorylation and integration into focal adhesion complexes during epithelial-tomesenchymal transition. Interacts with synaptic plasticity regulator PANTS. Polysialylated by ST8SIA2 and ST8SIA4. Polysialylation modulates cell interactions by confering both attractive and repulsive properties that are highly regulated by ST8SIA2 and ST8SIA4. Polysialylation is formed on a-2,3-linked sialic acid of core glycans.

The protein resides in the cell membrane. Its function is as follows. This protein is a cell adhesion molecule involved in neuron-neuron adhesion, neurite fasciculation, outgrowth of neurites, etc. This Mus musculus (Mouse) protein is Neural cell adhesion molecule 1.